The sequence spans 250 residues: Isoprenyl transferase (250 aa).

Aspartate 26 is an active-site residue. Mg(2+) is bound at residue aspartate 26. Substrate is bound by residues 27–30, tryptophan 31, arginine 39, histidine 43, and 71–73; these read GNGR and STE. The Proton acceptor role is filled by asparagine 74. Substrate contacts are provided by residues tryptophan 75, arginine 77, arginine 198, and 204 to 206; that span reads RLS. Position 217 (glutamate 217) interacts with Mg(2+).

It belongs to the UPP synthase family. As to quaternary structure, homodimer. The cofactor is Mg(2+).

Functionally, catalyzes the condensation of isopentenyl diphosphate (IPP) with allylic pyrophosphates generating different type of terpenoids. This is Isoprenyl transferase from Streptococcus agalactiae serotype V (strain ATCC BAA-611 / 2603 V/R).